We begin with the raw amino-acid sequence, 360 residues long: UDP-N-acetylglucosamine--N-acetylmuramyl-(pentapeptide) pyrophosphoryl-undecaprenol N-acetylglucosamine transferase (360 aa).

UDP-N-acetyl-alpha-D-glucosamine-binding positions include 17 to 19 (TAG), Asn130, Arg166, Ser200, Ile247, and Gln291.

This sequence belongs to the glycosyltransferase 28 family. MurG subfamily.

It localises to the cell membrane. It catalyses the reaction di-trans,octa-cis-undecaprenyl diphospho-N-acetyl-alpha-D-muramoyl-L-alanyl-D-glutamyl-meso-2,6-diaminopimeloyl-D-alanyl-D-alanine + UDP-N-acetyl-alpha-D-glucosamine = di-trans,octa-cis-undecaprenyl diphospho-[N-acetyl-alpha-D-glucosaminyl-(1-&gt;4)]-N-acetyl-alpha-D-muramoyl-L-alanyl-D-glutamyl-meso-2,6-diaminopimeloyl-D-alanyl-D-alanine + UDP + H(+). It functions in the pathway cell wall biogenesis; peptidoglycan biosynthesis. In terms of biological role, cell wall formation. Catalyzes the transfer of a GlcNAc subunit on undecaprenyl-pyrophosphoryl-MurNAc-pentapeptide (lipid intermediate I) to form undecaprenyl-pyrophosphoryl-MurNAc-(pentapeptide)GlcNAc (lipid intermediate II). In Corynebacterium efficiens (strain DSM 44549 / YS-314 / AJ 12310 / JCM 11189 / NBRC 100395), this protein is UDP-N-acetylglucosamine--N-acetylmuramyl-(pentapeptide) pyrophosphoryl-undecaprenol N-acetylglucosamine transferase.